The sequence spans 357 residues: Histidine biosynthesis bifunctional protein HisB (357 aa).

The histidinol-phosphatase stretch occupies residues 1-168; that stretch reads MTPILFIDRD…GIAHALADAP (168 aa). The active-site Nucleophile is aspartate 8. Positions 8, 10, and 128 each coordinate Mg(2+). Aspartate 10 serves as the catalytic Proton donor. The tract at residues 169-357 is imidazoleglycerol-phosphate dehydratase; sequence RTAVVQRDTK…TALPSTKGAL (189 aa).

It in the N-terminal section; belongs to the histidinol-phosphatase family. This sequence in the C-terminal section; belongs to the imidazoleglycerol-phosphate dehydratase family. It depends on Mg(2+) as a cofactor.

The protein resides in the cytoplasm. It carries out the reaction D-erythro-1-(imidazol-4-yl)glycerol 3-phosphate = 3-(imidazol-4-yl)-2-oxopropyl phosphate + H2O. It catalyses the reaction L-histidinol phosphate + H2O = L-histidinol + phosphate. It participates in amino-acid biosynthesis; L-histidine biosynthesis; L-histidine from 5-phospho-alpha-D-ribose 1-diphosphate: step 6/9. The protein operates within amino-acid biosynthesis; L-histidine biosynthesis; L-histidine from 5-phospho-alpha-D-ribose 1-diphosphate: step 8/9. The sequence is that of Histidine biosynthesis bifunctional protein HisB from Stenotrophomonas maltophilia (strain K279a).